Here is a 161-residue protein sequence, read N- to C-terminus: NADH-quinone oxidoreductase subunit I (161 aa).

4Fe-4S ferredoxin-type domains lie at 52–82 (LRRYPDGEERCIACKLCEAICPAQAITIEAK) and 92–121 (TKYDIDMTKCIYCGLCQEACPVDAIVEGPN). Residues Cys-62, Cys-65, Cys-68, Cys-72, Cys-101, Cys-104, Cys-107, and Cys-111 each contribute to the [4Fe-4S] cluster site.

The protein belongs to the complex I 23 kDa subunit family. As to quaternary structure, NDH-1 is composed of 14 different subunits. Subunits NuoA, H, J, K, L, M, N constitute the membrane sector of the complex. [4Fe-4S] cluster is required as a cofactor.

Its subcellular location is the cell inner membrane. It catalyses the reaction a quinone + NADH + 5 H(+)(in) = a quinol + NAD(+) + 4 H(+)(out). In terms of biological role, NDH-1 shuttles electrons from NADH, via FMN and iron-sulfur (Fe-S) centers, to quinones in the respiratory chain. The immediate electron acceptor for the enzyme in this species is believed to be ubiquinone. Couples the redox reaction to proton translocation (for every two electrons transferred, four hydrogen ions are translocated across the cytoplasmic membrane), and thus conserves the redox energy in a proton gradient. The polypeptide is NADH-quinone oxidoreductase subunit I (Orientia tsutsugamushi (strain Boryong) (Rickettsia tsutsugamushi)).